A 75-amino-acid chain; its full sequence is UPF0352 protein VV1_3121 (75 aa).

It belongs to the UPF0352 family.

This Vibrio vulnificus (strain CMCP6) protein is UPF0352 protein VV1_3121.